Reading from the N-terminus, the 86-residue chain is Toxin ICK-18 (86 aa).

A signal peptide spans 1–19 (MKTIFALVFCCAIAVVVLG). 4 disulfide bridges follow: Cys-35–Cys-49, Cys-42–Cys-61, Cys-48–Cys-76, and Cys-79–Cys-86.

Belongs to the neurotoxin 21 family. In terms of tissue distribution, expressed by the venom gland.

The protein resides in the secreted. Probable neurotoxin with ion channel impairing activity. This is Toxin ICK-18 from Trittame loki (Brush-footed trapdoor spider).